The chain runs to 400 residues: Jasmonate-induced oxygenase 1 (400 aa).

In terms of domain architecture, Fe2OG dioxygenase spans 248-349 (DVGACLRVNY…RVSLAFFYNP (102 aa)). Arg-254 is a binding site for jasmonate. Asn-256 and Tyr-258 together coordinate 2-oxoglutarate. Residues His-273, Asp-275, and His-330 each coordinate Fe cation. 2-oxoglutarate contacts are provided by Arg-340 and Ser-342. The jasmonate site is built by Arg-379 and Arg-383.

It belongs to the iron/ascorbate-dependent oxidoreductase family. Requires L-ascorbate as cofactor. It depends on Fe(2+) as a cofactor.

It carries out the reaction jasmonate + 2-oxoglutarate + O2 = (1R,2R)-12-hydroxyjasmonate + succinate + CO2. 2-oxoglutarate-dependent dioxygenase involved in the oxidation of jasmonate (JA), a stress-induced phytohormone synthesized in response to attack by pathogens and herbivores, which triggers the activation of defense responses via the JA-mediated signaling pathway. Converts JA to 12-hydroxyjasmonate (12OH-JA), an inactive form of JA. Prevents over-accumulation of JA and indirectly its bioactive form JA-Ile under stress response. Acts as a negative regulator of JA-mediated defense signaling, by contributing to 12OH-JA accumulation, which represses JA defense responses upon infection by the fungal pathogen Botrytis cinerea and the herbivorous caterpillar Mamestra brassicae. The protein is Jasmonate-induced oxygenase 1 of Arabidopsis thaliana (Mouse-ear cress).